The primary structure comprises 904 residues: Phosphoenolpyruvate carboxylase (904 aa).

Active-site residues include histidine 151 and lysine 570.

It belongs to the PEPCase type 1 family. The cofactor is Mg(2+).

It carries out the reaction oxaloacetate + phosphate = phosphoenolpyruvate + hydrogencarbonate. Functionally, forms oxaloacetate, a four-carbon dicarboxylic acid source for the tricarboxylic acid cycle. The polypeptide is Phosphoenolpyruvate carboxylase (Xanthomonas campestris pv. campestris (strain ATCC 33913 / DSM 3586 / NCPPB 528 / LMG 568 / P 25)).